Reading from the N-terminus, the 332-residue chain is 2,3-diketo-L-gulonate reductase (332 aa).

The active-site Proton donor is His44. Residues 168 to 174 (ITMVDMS), 224 to 225 (WK), and 304 to 306 (GHE) contribute to the NAD(+) site.

It belongs to the LDH2/MDH2 oxidoreductase family. DlgD subfamily. In terms of assembly, homodimer.

It localises to the cytoplasm. It catalyses the reaction 3-dehydro-L-gulonate + NAD(+) = 2,3-dioxo-L-gulonate + NADH + H(+). The enzyme catalyses 3-dehydro-L-gulonate + NADP(+) = 2,3-dioxo-L-gulonate + NADPH + H(+). Catalyzes the reduction of 2,3-diketo-L-gulonate in the presence of NADH, to form 3-keto-L-gulonate. The sequence is that of 2,3-diketo-L-gulonate reductase from Salmonella typhi.